The following is a 74-amino-acid chain: Guanine nucleotide-binding protein G(T) subunit gamma-T1 (74 aa).

At cysteine 71 the chain carries Cysteine methyl ester. Residue cysteine 71 is the site of S-farnesyl cysteine attachment. The propeptide at valine 72–serine 74 is removed in mature form.

The protein belongs to the G protein gamma family. As to quaternary structure, g proteins are composed of 3 units, alpha, beta and gamma. In terms of tissue distribution, retinal rod outer segment.

The protein resides in the cell membrane. Its function is as follows. Guanine nucleotide-binding proteins (G proteins) are involved as a modulator or transducer in various transmembrane signaling systems. The beta and gamma chains are required for the GTPase activity, for replacement of GDP by GTP, and for G protein-effector interaction. The sequence is that of Guanine nucleotide-binding protein G(T) subunit gamma-T1 (Gngt1) from Mus musculus (Mouse).